Reading from the N-terminus, the 1347-residue chain is G-protein coupled receptor-associated sorting protein 1 (1347 aa).

Disordered stretches follow at residues 1–75 (MTRA…AYAK), 145–174 (ESIP…SWYR), and 188–281 (DFKW…NSRS). Residues 21 to 33 (ENANAAEVEPEAP) show a composition bias toward low complexity. Over residues 211–226 (FRPRKSMKANNRFRHM) the composition is skewed to basic residues. Basic and acidic residues predominate over residues 263–278 (PKDKTKVWSKPKEEPN). Serine 295 carries the post-translational modification Phosphoserine. Disordered stretches follow at residues 310–344 (GEEA…AMSG), 364–396 (FSKS…QEAR), and 460–485 (QVSS…SKSM). Positions 316–325 (RSKPRARKGV) are enriched in basic residues. The segment covering 370–396 (KKEPRTRAVPKEEVKTKARASTKQEAR) has biased composition (basic and acidic residues). Residues 461-484 (VSSFCLGSGKKSSMESGPKATSKS) show a composition bias toward polar residues. 2 positions are modified to phosphoserine: serine 619 and serine 626. Threonine 860 carries the post-translational modification Phosphothreonine. Serine 862 is subject to Phosphoserine.

Belongs to the GPRASP family. In terms of assembly, interacts with cytoplasmic tails of a variety of G-protein coupled receptors such as delta opioid receptor/OPRD1, beta-2 adrenergic receptor/ADRB2 and D4 dopamine receptor/DRD4 as well as D2 dopamine receptor/DRD2. Interacts with PER1. Interacts with BECN2; the interaction is direct. In terms of tissue distribution, expressed in the brain, with higher expression in the hippocampus, hypothalamus and olfactory bulb.

It localises to the cytoplasm. In terms of biological role, modulates lysosomal sorting and functional down-regulation of a variety of G-protein coupled receptors. Targets receptors for degradation in lysosomes via its interaction with BECN2. The sequence is that of G-protein coupled receptor-associated sorting protein 1 (Gprasp1) from Mus musculus (Mouse).